The following is a 519-amino-acid chain: Voltage-gated potassium channel regulatory subunit KCNG4 (519 aa).

Residues 1-25 (MPMPSRDGGLHPRHHHYGSHSPWSQ) are disordered. The Cytoplasmic portion of the chain corresponds to 1–218 (MPMPSRDGGL…EMVENPQSGL (218 aa)). A helical membrane pass occupies residues 219–240 (PGKVFACLSILFVATTAVSLCV). Topologically, residues 241-261 (STMPDLRAEEDQGECSRKCYY) are extracellular. Residues 262 to 283 (IFIVETICVAWFSLEFCLRFVQ) traverse the membrane as a helical segment. Over 284–294 (AQDKCQFFQGP) the chain is Cytoplasmic. Residues 295–314 (LNIIDILAISPYYVSLAVSE) form a helical membrane-spanning segment. Residues 315-328 (EPPEDGERPSGSSY) are Extracellular-facing. Residues 329–353 (LEKVGLVLRVLRALRILYVMRLARH) traverse the membrane as a helical; Voltage-sensor segment. Residues 354-368 (SLGLQTLGLTVRRCT) lie on the Cytoplasmic side of the membrane. Residues 369 to 390 (REFGLLLLFLAVAITLFSPLVY) traverse the membrane as a helical segment. Residues 391–405 (VAEKESGRVLEFTSI) lie on the Extracellular side of the membrane. The segment at residues 406-417 (PASYWWAIISMT) is an intramembrane region (helical). The Selectivity filter motif lies at 418–423 (TVGYGD). The stretch at 418–425 (TVGYGDMV) is an intramembrane region. At 426 to 432 (PRSVPGQ) the chain is on the extracellular side. Residues 433-461 (MVALSSILSGILIMAFPATSIFHTFSHSY) form a helical membrane-spanning segment. The Cytoplasmic portion of the chain corresponds to 462–519 (LELKKEQEQLQARLRHLQNTGPASECELLDPHVASEHELMNDVNDLILEGPALPIMHM).

Belongs to the potassium channel family. G (TC 1.A.1.2) subfamily. Kv6.4/KCNG4 sub-subfamily. In terms of assembly, heterotetramer with KCNB1. Does not form homomultimer. Highly expressed in brain, and at lower levels in liver, small intestine and colon.

Its subcellular location is the cell membrane. In terms of biological role, regulatory subunit of the voltage-gated potassium (Kv) channel which, when coassembled with KCNB1, modulates the kinetics parameters of the heterotetrameric channel namely the time course of activation, deactivation and inactivation and on the voltage-dependence of activation. Potassium channel subunit that does not form functional channels by itself. Reduces the deactivation rate. Modulates the threshold for activation by shifting by approximately 20 mV in hyperpolarizing direction. Markedly changes the inactivation by shifting the voltage dependence of inactivation by approximately 40 mV in hyperpolarizing direction. Acceleratee activation and enhances the time course of activation. In Homo sapiens (Human), this protein is Voltage-gated potassium channel regulatory subunit KCNG4.